The primary structure comprises 190 residues: Potassium-transporting ATPase KdpC subunit (190 aa).

A helical membrane pass occupies residues 10 to 30 (VLLLVLTGLTGFAYPLLSTAI).

The protein belongs to the KdpC family. The system is composed of three essential subunits: KdpA, KdpB and KdpC.

Its subcellular location is the cell inner membrane. In terms of biological role, part of the high-affinity ATP-driven potassium transport (or Kdp) system, which catalyzes the hydrolysis of ATP coupled with the electrogenic transport of potassium into the cytoplasm. This subunit acts as a catalytic chaperone that increases the ATP-binding affinity of the ATP-hydrolyzing subunit KdpB by the formation of a transient KdpB/KdpC/ATP ternary complex. This chain is Potassium-transporting ATPase KdpC subunit, found in Sorangium cellulosum (strain So ce56) (Polyangium cellulosum (strain So ce56)).